We begin with the raw amino-acid sequence, 835 residues long: Microcephalin (835 aa).

The BRCT 1 domain occupies 1–93 (MAAPILKDVV…AHIDESLFPA (93 aa)). Residues S279, S287, S296, and S333 each carry the phosphoserine modification. Disordered regions lie at residues 332–376 (LSPT…RKRS) and 417–442 (SPDN…PAQF). Residue T335 is modified to Phosphothreonine. Over residues 343 to 361 (LLIHSRPRSSSVKRKRVSH) the composition is skewed to basic residues. Position 548 is a phosphoserine (S548). The interval 555–583 (AVDLKSTQNKGTTSKISNSSEGEAQSEHE) is disordered. Polar residues predominate over residues 559-577 (KSTQNKGTTSKISNSSEGE). BRCT domains follow at residues 640–730 (SGRG…PFEL) and 751–833 (YRGT…NYLL).

Interacts with CDC27 and maybe other components of the APC/C complex. Interacts with histone variant H2AX under DNA damage conditions.

It is found in the cytoplasm. The protein localises to the cytoskeleton. The protein resides in the microtubule organizing center. Its subcellular location is the centrosome. Implicated in chromosome condensation and DNA damage induced cellular responses. May play a role in neurogenesis and regulation of the size of the cerebral cortex. The protein is Microcephalin of Pan troglodytes (Chimpanzee).